The sequence spans 472 residues: Na(+)/H(+) antiporter NhaA (472 aa).

The next 11 membrane-spanning stretches (helical) occupy residues 48 to 68, 91 to 111, 129 to 149, 157 to 177, 185 to 205, 210 to 230, 237 to 257, 337 to 357, 374 to 394, 410 to 430, and 443 to 463; these read AGGI…NSAW, MSLH…VVGL, ALPV…YFAV, AGWG…LVLL, LIIF…LVIA, HEIS…LLLL, HAIP…HSGV, GPWV…GIDF, VCLG…WIAV, LLGV…ISQL, and LGIL…LYFG.

This sequence belongs to the NhaA Na(+)/H(+) (TC 2.A.33) antiporter family.

It localises to the cell inner membrane. It carries out the reaction Na(+)(in) + 2 H(+)(out) = Na(+)(out) + 2 H(+)(in). In terms of biological role, na(+)/H(+) antiporter that extrudes sodium in exchange for external protons. The chain is Na(+)/H(+) antiporter NhaA from Syntrophobacter fumaroxidans (strain DSM 10017 / MPOB).